The primary structure comprises 687 residues: Glycine--tRNA ligase beta subunit (687 aa).

The protein belongs to the class-II aminoacyl-tRNA synthetase family. As to quaternary structure, tetramer of two alpha and two beta subunits.

The protein localises to the cytoplasm. The enzyme catalyses tRNA(Gly) + glycine + ATP = glycyl-tRNA(Gly) + AMP + diphosphate. This Neisseria gonorrhoeae (strain NCCP11945) protein is Glycine--tRNA ligase beta subunit.